The sequence spans 543 residues: Probable malate:quinone oxidoreductase (543 aa).

This sequence belongs to the MQO family. FAD serves as cofactor.

The enzyme catalyses (S)-malate + a quinone = a quinol + oxaloacetate. Its pathway is carbohydrate metabolism; tricarboxylic acid cycle; oxaloacetate from (S)-malate (quinone route): step 1/1. This is Probable malate:quinone oxidoreductase from Acinetobacter baylyi (strain ATCC 33305 / BD413 / ADP1).